Here is a 469-residue protein sequence, read N- to C-terminus: Argininosuccinate lyase (469 aa).

The protein belongs to the lyase 1 family. Argininosuccinate lyase subfamily.

The protein localises to the cytoplasm. It carries out the reaction 2-(N(omega)-L-arginino)succinate = fumarate + L-arginine. Its pathway is amino-acid biosynthesis; L-arginine biosynthesis; L-arginine from L-ornithine and carbamoyl phosphate: step 3/3. The sequence is that of Argininosuccinate lyase from Burkholderia cenocepacia (strain HI2424).